The following is a 251-amino-acid chain: B3 domain-containing protein REM7 (251 aa).

2 DNA-binding regions (TF-B3) span residues 11–103 (NSHF…LGPS) and 170–251 (CFVA…SRLN).

It is found in the nucleus. This is B3 domain-containing protein REM7 (REM7) from Arabidopsis thaliana (Mouse-ear cress).